A 146-amino-acid polypeptide reads, in one-letter code: uncharacterized protein (146 aa).

In terms of domain architecture, N-acetyltransferase spans 7–146; sequence LQINYKTDEL…EGHDILIWNP (140 aa).

This is an uncharacterized protein from Staphylococcus epidermidis (strain ATCC 12228 / FDA PCI 1200).